Here is a 548-residue protein sequence, read N- to C-terminus: uncharacterized protein (548 aa).

Phosphoserine occurs at positions 19 and 25. At T47 the chain carries Phosphothreonine.

This is an uncharacterized protein from Schizosaccharomyces pombe (strain 972 / ATCC 24843) (Fission yeast).